We begin with the raw amino-acid sequence, 358 residues long: U5 small nuclear ribonucleoprotein 40 kDa protein (358 aa).

Lysine 18 is covalently cross-linked (Glycyl lysine isopeptide (Lys-Gly) (interchain with G-Cter in SUMO2)). An Asymmetric dimethylarginine modification is found at arginine 21. WD repeat units follow at residues 65 to 104 (GHEG…DNYA), 108 to 147 (GHSG…RVKR), 150 to 190 (GHTS…AVQT), 192 to 231 (QNTY…LTYT), 234 to 273 (GHAD…PKER), 284 to 323 (NFEK…VLYK), and 326 to 358 (GHAG…GEIQ). Lysine 271 is covalently cross-linked (Glycyl lysine isopeptide (Lys-Gly) (interchain with G-Cter in SUMO2)).

Component of the pre-catalytic and catalytic spliceosome complexes. Component of the postcatalytic spliceosome P complex. Part of the U5 snRNP complex. Interacts with PRPF8. Component of the U4/U6-U5 tri-snRNP complex composed of the U4, U6 and U5 snRNAs and at least PRPF3, PRPF4, PRPF6, PRPF8, PRPF31, SNRNP200, TXNL4A, WDR57, SNRNP40, DDX23, CD2BP2, PPIH, SNU13, EFTUD2, SART1 and USP39. Component of the minor spliceosome, which splices U12-type introns.

The protein localises to the nucleus. In terms of biological role, required for pre-mRNA splicing as component of the activated spliceosome. Component of the U5 small nuclear ribonucleoprotein (snRNP) complex and the U4/U6-U5 tri-snRNP complex, building blocks of the spliceosome. As a component of the minor spliceosome, involved in the splicing of U12-type introns in pre-mRNAs. This is U5 small nuclear ribonucleoprotein 40 kDa protein (Snrnp40) from Mus musculus (Mouse).